Here is a 251-residue protein sequence, read N- to C-terminus: Sugar fermentation stimulation protein homolog (251 aa).

Belongs to the SfsA family.

In Prochlorococcus marinus (strain SARG / CCMP1375 / SS120), this protein is Sugar fermentation stimulation protein homolog.